Reading from the N-terminus, the 218-residue chain is Glutathione S-transferase Mu 3 (218 aa).

The GST N-terminal domain maps to P2–G88. Glutathione-binding positions include Y7–W8, W46–K50, and N59–L60. K50 is covalently cross-linked (Glycyl lysine isopeptide (Lys-Gly) (interchain with G-Cter in SUMO2)). K69 participates in a covalent cross-link: Glycyl lysine isopeptide (Lys-Gly) (interchain with G-Cter in SUMO2). Q72–S73 is a glutathione binding site. In terms of domain architecture, GST C-terminal spans T90–V208.

The protein belongs to the GST superfamily. Mu family. Homodimer.

It is found in the cytoplasm. The catalysed reaction is RX + glutathione = an S-substituted glutathione + a halide anion + H(+). Its function is as follows. Conjugation of reduced glutathione to a wide number of exogenous and endogenous hydrophobic electrophiles. The sequence is that of Glutathione S-transferase Mu 3 (Gstm3) from Mus musculus (Mouse).